The following is a 247-amino-acid chain: Carboxy-S-adenosyl-L-methionine synthase (247 aa).

S-adenosyl-L-methionine-binding positions include tyrosine 40, 65-67 (GSS), 90-91 (DN), 122-123 (DI), asparagine 137, and arginine 204.

This sequence belongs to the class I-like SAM-binding methyltransferase superfamily. Cx-SAM synthase family. As to quaternary structure, homodimer.

The catalysed reaction is prephenate + S-adenosyl-L-methionine = carboxy-S-adenosyl-L-methionine + 3-phenylpyruvate + H2O. In terms of biological role, catalyzes the conversion of S-adenosyl-L-methionine (SAM) to carboxy-S-adenosyl-L-methionine (Cx-SAM). This chain is Carboxy-S-adenosyl-L-methionine synthase, found in Pseudomonas fluorescens (strain SBW25).